Reading from the N-terminus, the 74-residue chain is Large ribosomal subunit protein bL31 (74 aa).

Zn(2+) contacts are provided by C16, C18, C38, and C41.

It belongs to the bacterial ribosomal protein bL31 family. Type A subfamily. Part of the 50S ribosomal subunit. Zn(2+) is required as a cofactor.

Its function is as follows. Binds the 23S rRNA. This is Large ribosomal subunit protein bL31 from Salinispora arenicola (strain CNS-205).